A 547-amino-acid polypeptide reads, in one-letter code: Chaperonin GroEL 1 (547 aa).

Residues 30–33, Lys-51, 87–91, Gly-415, and Asp-496 contribute to the ATP site; these read TLGP and DGTTT.

The protein belongs to the chaperonin (HSP60) family. As to quaternary structure, forms a cylinder of 14 subunits composed of two heptameric rings stacked back-to-back. Interacts with the co-chaperonin GroES.

The protein resides in the cytoplasm. It catalyses the reaction ATP + H2O + a folded polypeptide = ADP + phosphate + an unfolded polypeptide.. Its function is as follows. Together with its co-chaperonin GroES, plays an essential role in assisting protein folding. The GroEL-GroES system forms a nano-cage that allows encapsulation of the non-native substrate proteins and provides a physical environment optimized to promote and accelerate protein folding. In Rhodopseudomonas palustris (strain ATCC BAA-98 / CGA009), this protein is Chaperonin GroEL 1.